Reading from the N-terminus, the 293-residue chain is Lipoyl synthase (293 aa).

7 residues coordinate [4Fe-4S] cluster: Cys-38, Cys-43, Cys-49, Cys-64, Cys-68, Cys-71, and Ser-277. Positions 50–266 (WSRGTATFLL…STIAKNAGIR (217 aa)) constitute a Radical SAM core domain.

The protein belongs to the radical SAM superfamily. Lipoyl synthase family. [4Fe-4S] cluster serves as cofactor.

The protein resides in the cytoplasm. It carries out the reaction [[Fe-S] cluster scaffold protein carrying a second [4Fe-4S](2+) cluster] + N(6)-octanoyl-L-lysyl-[protein] + 2 oxidized [2Fe-2S]-[ferredoxin] + 2 S-adenosyl-L-methionine + 4 H(+) = [[Fe-S] cluster scaffold protein] + N(6)-[(R)-dihydrolipoyl]-L-lysyl-[protein] + 4 Fe(3+) + 2 hydrogen sulfide + 2 5'-deoxyadenosine + 2 L-methionine + 2 reduced [2Fe-2S]-[ferredoxin]. Its pathway is protein modification; protein lipoylation via endogenous pathway; protein N(6)-(lipoyl)lysine from octanoyl-[acyl-carrier-protein]: step 2/2. In terms of biological role, catalyzes the radical-mediated insertion of two sulfur atoms into the C-6 and C-8 positions of the octanoyl moiety bound to the lipoyl domains of lipoate-dependent enzymes, thereby converting the octanoylated domains into lipoylated derivatives. This chain is Lipoyl synthase, found in Chlorobium chlorochromatii (strain CaD3).